A 343-amino-acid chain; its full sequence is Anthranilate phosphoribosyltransferase (343 aa).

Residues glycine 81, 84 to 85, 91 to 94, 109 to 117, and serine 121 contribute to the 5-phospho-alpha-D-ribose 1-diphosphate site; these read GD, NVST, and KHGNRSVSS. Glycine 81 contributes to the anthranilate binding site. Serine 93 is a Mg(2+) binding site. Asparagine 112 provides a ligand contact to anthranilate. Residue arginine 167 coordinates anthranilate. Residues aspartate 226 and glutamate 227 each contribute to the Mg(2+) site.

It belongs to the anthranilate phosphoribosyltransferase family. In terms of assembly, homodimer. It depends on Mg(2+) as a cofactor.

It catalyses the reaction N-(5-phospho-beta-D-ribosyl)anthranilate + diphosphate = 5-phospho-alpha-D-ribose 1-diphosphate + anthranilate. Its pathway is amino-acid biosynthesis; L-tryptophan biosynthesis; L-tryptophan from chorismate: step 2/5. In terms of biological role, catalyzes the transfer of the phosphoribosyl group of 5-phosphorylribose-1-pyrophosphate (PRPP) to anthranilate to yield N-(5'-phosphoribosyl)-anthranilate (PRA). The protein is Anthranilate phosphoribosyltransferase of Chromohalobacter salexigens (strain ATCC BAA-138 / DSM 3043 / CIP 106854 / NCIMB 13768 / 1H11).